Reading from the N-terminus, the 152-residue chain is Toxin Res (152 aa).

This sequence belongs to the MbcT/ParT/Res family. Homodimer. Forms a complex with cognate antitoxin Xre.

Its function is as follows. Toxic component of a type II toxin-antitoxin (TA) system. Expression in E.coli inhibits cell growth; bacteriostasis is neutralized by expression of cognate antitoxin Xre. Probably depletes intracellular NAD(+). The protein is Toxin Res of Yersinia enterocolitica serotype O:8 / biotype 1B (strain NCTC 13174 / 8081).